Here is a 62-residue protein sequence, read N- to C-terminus: Arabinogalactan protein 40 (62 aa).

An N-terminal signal peptide occupies residues 1–22; that stretch reads MEMKNIFVALFISAVLVSSVSA. 4-hydroxyproline is present on residues proline 28, proline 30, and proline 32. Residues proline 28, proline 30, and proline 32 are each glycosylated (O-linked (Ara...) hydroxyproline). Serine 35 carries GPI-anchor amidated serine lipidation. Positions 36–62 are cleaved as a propeptide — removed in mature form; it reads SASTVAFPVVGSIVAASLSAFLALLLQ.

The protein belongs to the AG-peptide AGP family. Contains 4-hydroxyproline; hydroxylated on Pro-28, Pro-30 and Pro-32. Post-translationally, O-glycosylated on hydroxyprolines; noncontiguous hydroxylproline residues are glycosylated with arabinogalactan.

It localises to the cell membrane. Its function is as follows. Proteoglycan that seems to be implicated in diverse developmental roles such as differentiation, cell-cell recognition, embryogenesis and programmed cell death. The polypeptide is Arabinogalactan protein 40 (Arabidopsis thaliana (Mouse-ear cress)).